Consider the following 177-residue polypeptide: Large ribosomal subunit protein uL6 (177 aa).

This sequence belongs to the universal ribosomal protein uL6 family. Part of the 50S ribosomal subunit.

Functionally, this protein binds to the 23S rRNA, and is important in its secondary structure. It is located near the subunit interface in the base of the L7/L12 stalk, and near the tRNA binding site of the peptidyltransferase center. This chain is Large ribosomal subunit protein uL6, found in Azorhizobium caulinodans (strain ATCC 43989 / DSM 5975 / JCM 20966 / LMG 6465 / NBRC 14845 / NCIMB 13405 / ORS 571).